A 456-amino-acid chain; its full sequence is Signal recognition particle 54 kDa protein (456 aa).

GTP-binding positions include G104–T111, D184–R188, and T242–D245.

This sequence belongs to the GTP-binding SRP family. SRP54 subfamily. In terms of assembly, part of the signal recognition particle protein translocation system, which is composed of SRP and FtsY. Archaeal SRP consists of a 7S RNA molecule of 300 nucleotides and two protein subunits: SRP54 and SRP19.

The protein localises to the cytoplasm. The catalysed reaction is GTP + H2O = GDP + phosphate + H(+). Involved in targeting and insertion of nascent membrane proteins into the cytoplasmic membrane. Binds to the hydrophobic signal sequence of the ribosome-nascent chain (RNC) as it emerges from the ribosomes. The SRP-RNC complex is then targeted to the cytoplasmic membrane where it interacts with the SRP receptor FtsY. The sequence is that of Signal recognition particle 54 kDa protein from Thermoplasma acidophilum (strain ATCC 25905 / DSM 1728 / JCM 9062 / NBRC 15155 / AMRC-C165).